We begin with the raw amino-acid sequence, 283 residues long: MEMO1 family protein DKAM_1357 (283 aa).

It belongs to the MEMO1 family.

This is MEMO1 family protein DKAM_1357 from Desulfurococcus amylolyticus (strain DSM 18924 / JCM 16383 / VKM B-2413 / 1221n) (Desulfurococcus kamchatkensis).